We begin with the raw amino-acid sequence, 311 residues long: tRNA pseudouridine synthase B (311 aa).

Aspartate 49 serves as the catalytic Nucleophile.

This sequence belongs to the pseudouridine synthase TruB family. Type 1 subfamily.

The catalysed reaction is uridine(55) in tRNA = pseudouridine(55) in tRNA. In terms of biological role, responsible for synthesis of pseudouridine from uracil-55 in the psi GC loop of transfer RNAs. The sequence is that of tRNA pseudouridine synthase B from Actinobacillus succinogenes (strain ATCC 55618 / DSM 22257 / CCUG 43843 / 130Z).